We begin with the raw amino-acid sequence, 153 residues long: Pheromone-binding protein Gp-9 (153 aa).

The signal sequence occupies residues 1–19 (MKTFVLHIFIFALVAFASA). Cystine bridges form between Cys-37–Cys-77, Cys-73–Cys-129, and Cys-118–Cys-138.

Belongs to the PBP/GOBP family. As to quaternary structure, homodimer.

Its subcellular location is the secreted. Functionally, colony queen number, a major feature of social organization, is associated with worker genotype for Gp-9. Colonies are headed by either a single reproductive queen (monogyne form) or multiple queens (polygyne form). Differences in worker Gp-9 genotypes between social forms may cause differences in workers' abilities to recognize queens and regulate their numbers. The polypeptide is Pheromone-binding protein Gp-9 (Solenopsis pusillignis (Fire ant)).